The primary structure comprises 186 residues: Thymidine kinase (186 aa).

Position 8–15 (8–15 (GPMYSGKT)) interacts with ATP. Residue Glu86 is the Proton acceptor of the active site. Phe118 is a binding site for substrate. Zn(2+) is bound by residues Cys143 and Cys146. 162–166 (IIEIG) provides a ligand contact to substrate. Cys175 and Cys178 together coordinate Zn(2+).

The protein belongs to the thymidine kinase family.

It catalyses the reaction thymidine + ATP = dTMP + ADP + H(+). In Choristoneura fumiferana (Spruce budworm moth), this protein is Thymidine kinase (TK).